Consider the following 407-residue polypeptide: NADH-quinone oxidoreductase subunit D (407 aa).

This sequence belongs to the complex I 49 kDa subunit family. As to quaternary structure, NDH-1 is composed of 14 different subunits. Subunits NuoB, C, D, E, F, and G constitute the peripheral sector of the complex.

It localises to the cell inner membrane. The enzyme catalyses a quinone + NADH + 5 H(+)(in) = a quinol + NAD(+) + 4 H(+)(out). Its function is as follows. NDH-1 shuttles electrons from NADH, via FMN and iron-sulfur (Fe-S) centers, to quinones in the respiratory chain. The immediate electron acceptor for the enzyme in this species is believed to be ubiquinone. Couples the redox reaction to proton translocation (for every two electrons transferred, four hydrogen ions are translocated across the cytoplasmic membrane), and thus conserves the redox energy in a proton gradient. The protein is NADH-quinone oxidoreductase subunit D of Roseobacter denitrificans (strain ATCC 33942 / OCh 114) (Erythrobacter sp. (strain OCh 114)).